A 230-amino-acid polypeptide reads, in one-letter code: RNA chaperone ProQ (230 aa).

Basic and acidic residues predominate over residues 105-125 (EAKARVQAQREQHQAKKREAG). Residues 105 to 182 (EAKARVQAQR…EQRKPVTDTT (78 aa)) are disordered. Residues 154–167 (PSRPQAARPASAPR) show a composition bias toward low complexity. Residues 168–178 (AESRVEQRKPV) show a composition bias toward basic and acidic residues.

Belongs to the ProQ family.

It localises to the cytoplasm. Functionally, RNA chaperone with significant RNA binding, RNA strand exchange and RNA duplexing activities. May regulate ProP activity through an RNA-based, post-transcriptional mechanism. In Erwinia tasmaniensis (strain DSM 17950 / CFBP 7177 / CIP 109463 / NCPPB 4357 / Et1/99), this protein is RNA chaperone ProQ.